Reading from the N-terminus, the 317-residue chain is Gamma-glutamyl hydrolase (317 aa).

The signal sequence occupies residues 1-24 (MASLGRLLCAWVLLLCGLASPGLS). A Gamma-glutamyl hydrolase domain is found at 25–317 (GSYERGSKRP…SSFQQAYMFN (293 aa)). 2 N-linked (GlcNAc...) asparagine glycosylation sites follow: Asn46 and Asn100. Cys133 acts as the Nucleophile in catalysis. Asn153, Asn162, Asn188, and Asn202 each carry an N-linked (GlcNAc...) asparagine glycan. His243 (proton donor) is an active-site residue. N-linked (GlcNAc...) asparagine glycosylation is present at Asn306.

Belongs to the peptidase C26 family. Homodimer.

It is found in the secreted. The protein localises to the extracellular space. It localises to the lysosome. The protein resides in the melanosome. It carries out the reaction (6S)-5,6,7,8-tetrahydrofolyl-(gamma-L-Glu)(n) + (n-1) H2O = (6S)-5,6,7,8-tetrahydrofolate + (n-1) L-glutamate. Its activity is regulated as follows. Activity is altered by insulin and estrogen. Functionally, hydrolyzes the polyglutamate sidechains of pteroylpolyglutamates. Progressively removes gamma-glutamyl residues from pteroylpoly-gamma-glutamate to yield pteroyl-alpha-glutamate (folic acid) and free glutamate. May play an important role in the bioavailability of dietary pteroylpolyglutamates and in the metabolism of pteroylpolyglutamates and antifolates. Exhibits either endo- or exopeptidase activity depending upon the tissue of origin. When secreted, it acts primarily as an endopeptidase. The chain is Gamma-glutamyl hydrolase (Ggh) from Rattus norvegicus (Rat).